The sequence spans 706 residues: Vitamin B12-dependent ribonucleoside-diphosphate reductase (706 aa).

The region spanning 21 to 109 (AKVRRRDGTL…IYRQRRAELR (89 aa)) is the ATP-cone domain. Substrate is bound by residues Ser191, 206 to 207 (GC), Gly235, 389 to 393 (NPCGE), and 534 to 538 (PTGTI). Cysteines 207 and 402 form a disulfide. Residue Asn389 is the Proton acceptor of the active site. The Cysteine radical intermediate role is filled by Cys391. Glu393 functions as the Proton acceptor in the catalytic mechanism.

It belongs to the ribonucleoside diphosphate reductase class-2 family. Requires adenosylcob(III)alamin as cofactor.

It catalyses the reaction a 2'-deoxyribonucleoside 5'-diphosphate + [thioredoxin]-disulfide + H2O = a ribonucleoside 5'-diphosphate + [thioredoxin]-dithiol. Its function is as follows. Provides the precursors necessary for DNA synthesis. Catalyzes the biosynthesis of deoxyribonucleotides from the corresponding ribonucleotides. This chain is Vitamin B12-dependent ribonucleoside-diphosphate reductase (nrdZ), found in Mycobacterium tuberculosis (strain ATCC 25618 / H37Rv).